The primary structure comprises 131 residues: Large ribosomal subunit protein bL19 (131 aa).

Belongs to the bacterial ribosomal protein bL19 family.

Its function is as follows. This protein is located at the 30S-50S ribosomal subunit interface and may play a role in the structure and function of the aminoacyl-tRNA binding site. The protein is Large ribosomal subunit protein bL19 of Afipia carboxidovorans (strain ATCC 49405 / DSM 1227 / KCTC 32145 / OM5) (Oligotropha carboxidovorans).